We begin with the raw amino-acid sequence, 59 residues long: Light-harvesting protein B-800-850 alpha chain E (59 aa).

Topologically, residues 1–11 (MNQGRIWTVVK) are cytoplasmic. The helical transmembrane segment at 12–35 (PTVGLPLLLGSVTVIAILVHFAVL) threads the bilayer. Position 31 (His-31) interacts with a bacteriochlorophyll. Residues 36 to 59 (SNTTWFSKYWNGKAAAIESSVSIG) lie on the Periplasmic side of the membrane.

The protein belongs to the antenna complex alpha subunit family. As to quaternary structure, the core complex is formed by different alpha and beta chains, binding bacteriochlorophyll molecules, and arranged most probably in tetrameric structures disposed around the reaction center. The non-pigmented gamma chains may constitute additional components.

It is found in the cell inner membrane. Antenna complexes are light-harvesting systems, which transfer the excitation energy to the reaction centers. The protein is Light-harvesting protein B-800-850 alpha chain E (pucAE) of Rhodopseudomonas palustris (strain ATCC BAA-98 / CGA009).